The primary structure comprises 228 residues: LexA repressor (228 aa).

The H-T-H motif DNA-binding region spans 26-46; sequence FDEMKDALDLRSKSGIHRLIT. Residues Ser-149 and Lys-187 each act as for autocatalytic cleavage activity in the active site.

Belongs to the peptidase S24 family. In terms of assembly, homodimer.

The enzyme catalyses Hydrolysis of Ala-|-Gly bond in repressor LexA.. In terms of biological role, represses a number of genes involved in the response to DNA damage (SOS response), including recA and lexA. In the presence of single-stranded DNA, RecA interacts with LexA causing an autocatalytic cleavage which disrupts the DNA-binding part of LexA, leading to derepression of the SOS regulon and eventually DNA repair. The protein is LexA repressor of Cereibacter sphaeroides (strain ATCC 17025 / ATH 2.4.3) (Rhodobacter sphaeroides).